The primary structure comprises 281 residues: Gas vesicle protein L1 (281 aa).

Belongs to the gas vesicle GvpF/GvpL family. In terms of assembly, may form oligomers. GvpF to GvpM interact with each other in vitro, and may form multi-subunit complex(es). Interacts with GvpC1, GvpN1 and GvpO1.

It localises to the gas vesicle. The protein resides in the cytoplasm. Functionally, proteins GvpF to GvpM might be involved in nucleating gas vesicle formation. A minor component of the gas vesicle. This the only minor gas vesicle protein that binds all the others (including GvpC1, GvpN1 and GvpO1, but not GvpA1), suggesting it might be able to assemble them. Gas vesicles are hollow, gas filled proteinaceous nanostructures found in several microbial planktonic microorganisms. They allow positioning of halobacteria at the optimal depth for growth in the poorly aerated, shallow brine pools of their habitat. Its function is as follows. Expression of a 9.5 kb p-vac DNA fragment containing 2 divergently transcribed regions (gvpD-gvpE-gvpF-gvpG-gvpH-gvpI-gvpJ-gvpK-gvpL-gvpM and gvpA-gvpC-gvpN-gvpO) allows H.volcanii to produce gas vesicles. A minimal gas vesicle can be made in H.volcanii by gvpA1-gvpO1 plus gvpF1-gvpG1-gvpJ1-gvpK1-gvpL1-gvpM1; lack of enough GvpJ1 prevents their formation. A similar region restores gas vesicle production in H.halobium without the p-vac locus, but it still has the c-vac locus. This is Gas vesicle protein L1 (gvpL11) from Halobacterium salinarum (strain ATCC 700922 / JCM 11081 / NRC-1) (Halobacterium halobium).